The chain runs to 243 residues: Derlin-1.1 (243 aa).

At 1–20 (MSSPAEYYKSLPPISKAYGT) the chain is on the cytoplasmic side. A helical membrane pass occupies residues 21 to 41 (LCFFTTVLVQLQILHPLFLYL). Residues 42–55 (DYPLVFKKFEIWRL) are Lumenal-facing. Residues 56 to 76 (LTSFFFLAPFSMKFGIRLLMI) traverse the membrane as a helical segment. At 77–94 (ARYGVMLEKGAFDKRTAD) the chain is on the cytoplasmic side. The chain crosses the membrane as a helical span at residues 95–115 (FLWMMIFGAISLLVLSIIPLF). Residues 116-157 (NSFFLGIPMVSMLLYVWSRENPNAQINIYGLVQLRSFYLPWA) lie on the Lumenal side of the membrane. The helical transmembrane segment at 158 to 178 (MLLLDVIFGSSLMPGLLGIMV) threads the bilayer. Topologically, residues 179-243 (GHLYYFFAVL…FRGRSYRLNQ (65 aa)) are cytoplasmic. Positions 219 to 243 (SPVRPPANGNSGSGVFRGRSYRLNQ) are disordered.

The protein belongs to the derlin family. As to expression, expressed in roots, stalks, leaves, immature ears, embryo and endosperm.

Its subcellular location is the endoplasmic reticulum membrane. Functionally, may be involved in the degradation process of specific misfolded endoplasmic reticulum (ER) luminal proteins. In Zea mays (Maize), this protein is Derlin-1.1 (DER1.1).